The sequence spans 395 residues: MDVSKVLILTLIWLLTADSAPPDYVTLTRKMESKILRVMGLSERPRPKPNATAPQYMWDLYRQQMAATEGAAASRGGETEIGKEEEEDGRPCSETKLSSNIIRSVSHTGGDLRASNSTSLQQILLFDVASIPHAETIEAADLRLEIPALPSATDVPSLAVRIYQLESRTRLNSIVSLKDKRLRLLDVVLADLSQGYAGTIDILSTVNSWRSKKTSNHGLLLHVELMSTSGNNRRGSQVIKELGAISKKCTANLIVTSSEYRQCSKRNRRNKRQAESEAPADISSFPTASLTNLCQRHRLFVSFRDVGWENWIIAPMGYQAYYCDGECPFPLGERLNGTNHAIIQTLVNSIDNRAVPKVCCAPTKLSGISMLYFDNNENVVLRQYEDMVVEACGCR.

An N-terminal signal peptide occupies residues 1-19 (MDVSKVLILTLIWLLTADS). Positions 20–272 (APPDYVTLTR…CSKRNRRNKR (253 aa)) are excised as a propeptide. N50 is a glycosylation site (N-linked (GlcNAc...) asparagine). The interval 69 to 97 (EGAAASRGGETEIGKEEEEDGRPCSETKL) is disordered. N-linked (GlcNAc...) asparagine glycosylation is found at N116 and N336. Cystine bridges form between C294–C360, C323–C392, and C327–C394.

Belongs to the TGF-beta family. As to quaternary structure, homodimer; disulfide-linked.

The protein resides in the secreted. Its function is as follows. Could have a critical role in early developmental decisions in the sea urchin embryo. The chain is Univin from Strongylocentrotus purpuratus (Purple sea urchin).